We begin with the raw amino-acid sequence, 99 residues long: Nucleoid-associated protein MGAS2096_Spy1605 (99 aa).

It belongs to the YbaB/EbfC family. In terms of assembly, homodimer.

The protein localises to the cytoplasm. It is found in the nucleoid. In terms of biological role, binds to DNA and alters its conformation. May be involved in regulation of gene expression, nucleoid organization and DNA protection. In Streptococcus pyogenes serotype M12 (strain MGAS2096), this protein is Nucleoid-associated protein MGAS2096_Spy1605.